A 90-amino-acid chain; its full sequence is Bombyxin B-5 (90 aa).

A signal peptide spans 1-20; that stretch reads MMKTAVMFILVVVISLTYSS. 3 disulfide bridges follow: cysteine 30–cysteine 75, cysteine 42–cysteine 88, and cysteine 74–cysteine 79. A propeptide spans 49–64 (c peptide like); it reads GGAQYAPYWQETYLRS.

This sequence belongs to the insulin family. Heterodimer of a B chain and an A chain linked by two disulfide bonds.

The protein resides in the secreted. Brain peptide responsible for activation of prothoracic glands to produce ecdysone in insects. The protein is Bombyxin B-5 (BBXB5) of Bombyx mori (Silk moth).